Here is a 422-residue protein sequence, read N- to C-terminus: Aspartate--tRNA(Asp/Asn) ligase (422 aa).

Glu-158 provides a ligand contact to L-aspartate. The interval 180–183 is aspartate; it reads QLYK. Arg-201 lines the L-aspartate pocket. Residues 201–203, 209–211, and Glu-345 contribute to the ATP site; these read RME and RHL. 2 residues coordinate L-aspartate: Ser-348 and Arg-352. 393 to 396 contributes to the ATP binding site; that stretch reads GAER.

This sequence belongs to the class-II aminoacyl-tRNA synthetase family. Type 2 subfamily. In terms of assembly, homodimer. Makes part of a ribonucleoprotein particle (RNP) called transamidosome that allows channelling of the aa-tRNA from non-discriminating aspartyl-tRNA synthetase active site to the GatCAB amidotransferase site. The transamidosome complex is formed by two GatCABs, one dimeric ND-AspRSs and two tRNAs(Asn) molecules.

It is found in the cytoplasm. The catalysed reaction is tRNA(Asx) + L-aspartate + ATP = L-aspartyl-tRNA(Asx) + AMP + diphosphate. Its function is as follows. Aspartyl-tRNA synthetase with relaxed tRNA specificity since it is able to aspartylate not only its cognate tRNA(Asp) but also tRNA(Asn) with similar efficiencies. Reaction proceeds in two steps: L-aspartate is first activated by ATP to form Asp-AMP and then transferred to the acceptor end of tRNA(Asp/Asn). The chain is Aspartate--tRNA(Asp/Asn) ligase (aspS2) from Thermus thermophilus (strain ATCC 27634 / DSM 579 / HB8).